The sequence spans 491 residues: Nucleoside transporter 1.1 (491 aa).

The next 6 helical transmembrane spans lie at 27–47, 82–102, 109–129, 136–156, 173–193, and 209–229; these read FYVYVVAFMCGVSMMMPVNAV, YNLIGIVTSLIMEPLTLLSWF, VRLLGGLVILIVEIIVLMVVP, AGAVATICCTGFIGGFGKSIF, STMMGGVGMSGVLTSLLQIIV, and KIYYGLDVGIQGMTFVALILL. A compositionally biased stretch (basic and acidic residues) spans 260–273; the sequence is CHTDEHPTHDKEGR. Disordered regions lie at residues 260 to 280 and 290 to 309; these read CHTDEHPTHDKEGRNSSSGKE and AAAKSEGPDAVEESSWPHEV. An N-linked (GlcNAc...) asparagine glycan is attached at Asn-274. Helical transmembrane passes span 333 to 353, 361 to 381, 395 to 415, 427 to 447, and 460 to 480; these read MFVACAFNFLITLFLFPGIAV, WFSTIAVFIFNVFDVLGRFSP, WIIVAASFARVIFVPLLLLHS, VMEVIFGFSNGYVGSMALVLG, and FVAGTLMGISILVGGTIGTVL.

Belongs to the SLC29A/ENT transporter (TC 2.A.57) family.

The protein localises to the membrane. The enzyme catalyses adenosine(in) + H(+)(in) = adenosine(out) + H(+)(out). It catalyses the reaction uridine(in) + H(+)(in) = uridine(out) + H(+)(out). In terms of biological role, sodium-independent high affinity nucleoside:H(+) symporter; transports adenosine and uridine. Can transport cytidine and thymidine. This chain is Nucleoside transporter 1.1, found in Leishmania donovani.